A 242-amino-acid chain; its full sequence is DnaJ homolog subfamily B member 6 (242 aa).

Residues 3–69 (EYYDVLGVQR…KKRDIYDKYG (67 aa)) enclose the J domain.

In terms of assembly, homooligomer.

It localises to the cytoplasm. It is found in the perinuclear region. The protein localises to the nucleus. Functionally, has a stimulatory effect on the ATPase activity of HSP70 in a dose-dependent and time-dependent manner and hence acts as a co-chaperone of HSP70. Plays an indispensable role in the organization of KRT8/KRT18 filaments. Acts as an endogenous molecular chaperone for neuronal proteins including huntingtin. Suppresses aggregation and toxicity of polyglutamine-containing, aggregation-prone proteins. Also reduces cellular toxicity and caspase-3 activity. The polypeptide is DnaJ homolog subfamily B member 6 (Xenopus tropicalis (Western clawed frog)).